Reading from the N-terminus, the 197-residue chain is Probable GTP-binding protein EngB (197 aa).

Positions 22-197 (TGVEVAFAGR…LKEKLDIWYQ (176 aa)) constitute an EngB-type G domain. Residues 30 to 37 (GRSNAGKS), 57 to 61 (GRTQL), 75 to 78 (DLPG), 142 to 145 (TKAD), and 177 to 179 (FSS) contribute to the GTP site. Ser-37 and Thr-59 together coordinate Mg(2+).

It belongs to the TRAFAC class TrmE-Era-EngA-EngB-Septin-like GTPase superfamily. EngB GTPase family. Requires Mg(2+) as cofactor.

Functionally, necessary for normal cell division and for the maintenance of normal septation. The polypeptide is Probable GTP-binding protein EngB (Francisella philomiragia subsp. philomiragia (strain ATCC 25017 / CCUG 19701 / FSC 153 / O#319-036)).